The chain runs to 444 residues: UDP-N-acetylmuramate--L-alanine ligase (444 aa).

Position 110–116 (110–116) interacts with ATP; the sequence is GAHGKTS.

It belongs to the MurCDEF family.

The protein resides in the cytoplasm. The enzyme catalyses UDP-N-acetyl-alpha-D-muramate + L-alanine + ATP = UDP-N-acetyl-alpha-D-muramoyl-L-alanine + ADP + phosphate + H(+). It participates in cell wall biogenesis; peptidoglycan biosynthesis. Its function is as follows. Cell wall formation. This Streptococcus pneumoniae (strain P1031) protein is UDP-N-acetylmuramate--L-alanine ligase.